The following is a 197-amino-acid chain: Ribonuclease HII (197 aa).

Residues 3–192 enclose the RNase H type-2 domain; sequence QLIAGVDEVG…VQLSLMQRGG (190 aa). Residues D9, E10, and D101 each contribute to the a divalent metal cation site.

It belongs to the RNase HII family. The cofactor is Mn(2+). It depends on Mg(2+) as a cofactor.

Its subcellular location is the cytoplasm. It carries out the reaction Endonucleolytic cleavage to 5'-phosphomonoester.. Functionally, endonuclease that specifically degrades the RNA of RNA-DNA hybrids. This is Ribonuclease HII from Pseudoalteromonas atlantica (strain T6c / ATCC BAA-1087).